Consider the following 182-residue polypeptide: Small ribosomal subunit protein uS4c (182 aa).

A disordered region spans residues 8–36; the sequence is LGALPGLTSKRPGSGSDPKNKSRSGKRSQ. Residues 82 to 143 form the S4 RNA-binding domain; it reads MRLDNILFRL…KQRSKALIQN (62 aa).

This sequence belongs to the universal ribosomal protein uS4 family. Part of the 30S ribosomal subunit. Contacts protein S5. The interaction surface between S4 and S5 is involved in control of translational fidelity.

The protein localises to the plastid. Its subcellular location is the chloroplast. In terms of biological role, one of the primary rRNA binding proteins, it binds directly to 16S rRNA where it nucleates assembly of the body of the 30S subunit. Its function is as follows. With S5 and S12 plays an important role in translational accuracy. The sequence is that of Small ribosomal subunit protein uS4c (rps4) from Dietes robinsoniana (Lord Howe wedding lily).